We begin with the raw amino-acid sequence, 114 residues long: Large ribosomal subunit protein uL22c (114 aa).

Belongs to the universal ribosomal protein uL22 family. As to quaternary structure, part of the 50S ribosomal subunit.

The protein resides in the plastid. It localises to the chloroplast. This protein binds specifically to 23S rRNA. In terms of biological role, the globular domain of the protein is located near the polypeptide exit tunnel on the outside of the subunit, while an extended beta-hairpin is found that lines the wall of the exit tunnel in the center of the 70S ribosome. The chain is Large ribosomal subunit protein uL22c (rpl22) from Gracilaria tenuistipitata (Red alga).